A 208-amino-acid polypeptide reads, in one-letter code: Large ribosomal subunit protein uL4 (208 aa).

The segment at arginine 45–glycine 85 is disordered. Residues glutamine 46–arginine 66 are compositionally biased toward basic residues. The span at glycine 69–serine 80 shows a compositional bias: polar residues.

The protein belongs to the universal ribosomal protein uL4 family. As to quaternary structure, part of the 50S ribosomal subunit.

In terms of biological role, one of the primary rRNA binding proteins, this protein initially binds near the 5'-end of the 23S rRNA. It is important during the early stages of 50S assembly. It makes multiple contacts with different domains of the 23S rRNA in the assembled 50S subunit and ribosome. Forms part of the polypeptide exit tunnel. This chain is Large ribosomal subunit protein uL4, found in Chlorobium phaeobacteroides (strain DSM 266 / SMG 266 / 2430).